The following is a 36-amino-acid chain: Photosystem I reaction center subunit VIII (36 aa).

The helical transmembrane segment at 9–29 (ILVPLVGLIFPAFSMALFFLY) threads the bilayer.

This sequence belongs to the PsaI family.

The protein resides in the plastid. The protein localises to the chloroplast thylakoid membrane. Its function is as follows. May help in the organization of the PsaL subunit. This chain is Photosystem I reaction center subunit VIII, found in Thalassiosira pseudonana (Marine diatom).